The primary structure comprises 78 residues: Protein SlyX homolog (78 aa).

It belongs to the SlyX family.

The chain is Protein SlyX homolog from Xanthomonas campestris pv. campestris (strain 8004).